Reading from the N-terminus, the 351-residue chain is Divinyl chlorophyll a/b light-harvesting protein PcbC (351 aa).

A run of 6 helical transmembrane segments spans residues Phe27 to Leu47, Leu64 to Thr84, Cys89 to Leu109, Val203 to Ala223, Val244 to Ala264, and Leu306 to Leu326.

The protein belongs to the PsbB/PsbC family. IsiA/Pcb subfamily. The antenna complex consists of divinyl chlorophylls (a and b) and divinyl chlorophyll a/b binding proteins and binds more divinyl chlorophyll b than does the antenna complex from high-light-adapted Prochlorococcus. The cofactor is divinyl chlorophyll a. Divinyl chlorophyll b serves as cofactor.

It localises to the cellular thylakoid membrane. Its function is as follows. The antenna complex functions as a light receptor, it captures and delivers excitation energy to photosystems II and I. The Prochlorales pcb genes are not related to higher plant LHCs. The protein is Divinyl chlorophyll a/b light-harvesting protein PcbC (pcbC) of Prochlorococcus marinus (strain SARG / CCMP1375 / SS120).